The sequence spans 507 residues: Cobyric acid synthase (507 aa).

A GATase cobBQ-type domain is found at Asp251–Phe448. Cys332 (nucleophile) is an active-site residue. His440 is a catalytic residue.

The protein belongs to the CobB/CobQ family. CobQ subfamily.

The protein operates within cofactor biosynthesis; adenosylcobalamin biosynthesis. Its function is as follows. Catalyzes amidations at positions B, D, E, and G on adenosylcobyrinic A,C-diamide. NH(2) groups are provided by glutamine, and one molecule of ATP is hydrogenolyzed for each amidation. This chain is Cobyric acid synthase, found in Klebsiella pneumoniae (strain 342).